Here is a 328-residue protein sequence, read N- to C-terminus: Phenylalanine--tRNA ligase alpha subunit (328 aa).

Residue E245 participates in Mg(2+) binding.

It belongs to the class-II aminoacyl-tRNA synthetase family. Phe-tRNA synthetase alpha subunit type 1 subfamily. In terms of assembly, tetramer of two alpha and two beta subunits. Requires Mg(2+) as cofactor.

It is found in the cytoplasm. It carries out the reaction tRNA(Phe) + L-phenylalanine + ATP = L-phenylalanyl-tRNA(Phe) + AMP + diphosphate + H(+). In Helicobacter pylori (strain HPAG1), this protein is Phenylalanine--tRNA ligase alpha subunit.